The sequence spans 88 residues: MASSKFVLFAILALSLLLSGTEARKTVWPSSELDPKCCSNQPEFGICDSKEDDERCAQMCLDGCPTNKGGGCQPITEAPGAVCSCYCA.

Positions 1–23 (MASSKFVLFAILALSLLLSGTEA) are cleaved as a signal peptide. 4 disulfides stabilise this stretch: Cys37-Cys87, Cys47-Cys72, Cys56-Cys83, and Cys60-Cys85.

The protein belongs to the DEFL family.

It localises to the secreted. The protein is Defensin-like protein 24 of Arabidopsis thaliana (Mouse-ear cress).